A 1060-amino-acid polypeptide reads, in one-letter code: CCR4-NOT transcriptional complex subunit CAF120 (1060 aa).

The segment at 1 to 29 (MRIFSGDNKVVDSPASNPGLMSPSNFGGD) is disordered. The region spanning 75 to 204 (RRYHEGVFLI…WNSAIRLCLY (130 aa)) is the PH domain. Residues 465–481 (KLSYGSKSSSNNSSKNS) are compositionally biased toward low complexity. Disordered regions lie at residues 465–588 (KLSY…ETSC), 718–742 (SINSNSDSDRINGSYSQVDFDNNND), and 801–1060 (EHRS…PYAQ). Positions 490–504 (LSSSSEQDLNNSDSP) are enriched in polar residues. A phosphoserine mark is found at serine 491, serine 510, serine 518, serine 538, and serine 556. Over residues 571 to 588 (NDRKATTPEKFERGETSC) the composition is skewed to basic and acidic residues. The segment covering 718-731 (SINSNSDSDRINGS) has biased composition (low complexity). Basic and acidic residues predominate over residues 801 to 814 (EHRSRHEVPKRSPE). A compositionally biased stretch (polar residues) spans 845-883 (SITPQRGQPVPSGQQISSYVQPANINSPNKMYGANNSAM). Phosphoserine is present on residues serine 871 and serine 885. Polar residues-rich tracts occupy residues 900-923 (QGWNNRPSPSNIYQRPHPSDTQPQ), 931-945 (PYSTGNRPNMQAQYH), and 1048-1060 (FMPSATTKNPYAQ).

Belongs to the CAF120 family. In terms of assembly, subunit of the 1.0 MDa CCR4-NOT core complex that contains CCR4, CAF1, CAF120, NOT1, NOT2, NOT3, NOT4, NOT5, CAF40 and CAF130. In the complex interacts with NOT1. The core complex probably is part of a less characterized 1.9 MDa CCR4-NOT complex.

The protein resides in the cytoplasm. It localises to the nucleus. The protein localises to the bud neck. Acts as a component of the CCR4-NOT core complex, which in the nucleus seems to be a general transcription factor, and in the cytoplasm the major mRNA deadenylase involved in mRNA turnover. The NOT protein subcomplex negatively regulates the basal and activated transcription of many genes. Preferentially affects TC-type TATA element-dependent transcription. Could directly or indirectly inhibit component(s) of the general transcription machinery. The sequence is that of CCR4-NOT transcriptional complex subunit CAF120 (CAF120) from Saccharomyces cerevisiae (strain YJM789) (Baker's yeast).